The following is an 83-amino-acid chain: Protein CASPARIAN STRIP INTEGRITY FACTOR 1 (83 aa).

A signal peptide spans 1-22 (MGMSPLTVKKLGFIFMIVSASA). Residues 59–83 (MNTKDYGNNSPSPRLERPPFKLIPN) are disordered. Residue Tyr64 is modified to Sulfotyrosine. A hydroxyproline mark is found at Pro69 and Pro71.

Interacts with the specific receptor kinases GSO1 and GSO2. As to expression, expressed exclusively in the root stele.

In terms of biological role, peptide hormone required for contiguous Casparian strip diffusion barrier formation in roots via the regulation of CASPs protein expression and distribution in a GSO1-GSO2 signaling pathway. The Casparian strip is required for ion homeostasis (e.g. iron and potassium ions). In Arabidopsis thaliana (Mouse-ear cress), this protein is Protein CASPARIAN STRIP INTEGRITY FACTOR 1.